We begin with the raw amino-acid sequence, 176 residues long: Transcription termination/antitermination protein NusG (176 aa).

Residues 125–149 (GEVVRVVEGPFANFTATVEEYDVEH) form the KOW domain.

The protein belongs to the NusG family.

Its function is as follows. Participates in transcription elongation, termination and antitermination. This chain is Transcription termination/antitermination protein NusG, found in Helicobacter pylori (strain J99 / ATCC 700824) (Campylobacter pylori J99).